We begin with the raw amino-acid sequence, 208 residues long: MAKVPVYNIEGQQIGEIELNDSIFNVPINTHVLHQAVVAHLANRRQGTFAAKTRAEVRGGGRKPWRQKGTGRARQGSIRAPTWRKGGVVFAKKPRDFSIDLPKKVKRLALKCALSSKVKENNLIVLDRWDMNQYKTKEVLRVLKNLGLENQKALIVIPEKNEYLQKSTKNIPEVKTLQVGNLNVFDILKYDKFVILQDAVKKVEEVYA.

Residues 58-77 form a disordered region; it reads RGGGRKPWRQKGTGRARQGS. A compositionally biased stretch (basic residues) spans 60-71; that stretch reads GGRKPWRQKGTG.

It belongs to the universal ribosomal protein uL4 family. In terms of assembly, part of the 50S ribosomal subunit.

Functionally, one of the primary rRNA binding proteins, this protein initially binds near the 5'-end of the 23S rRNA. It is important during the early stages of 50S assembly. It makes multiple contacts with different domains of the 23S rRNA in the assembled 50S subunit and ribosome. Its function is as follows. Forms part of the polypeptide exit tunnel. This is Large ribosomal subunit protein uL4 from Caldicellulosiruptor bescii (strain ATCC BAA-1888 / DSM 6725 / KCTC 15123 / Z-1320) (Anaerocellum thermophilum).